The primary structure comprises 535 residues: Zinc finger protein squeeze (535 aa).

2 stretches are compositionally biased toward low complexity: residues 70–97 (MVME…HPPQ) and 131–142 (SSASGSGSNGSS). The disordered stretch occupies residues 70–157 (MVMEQQPHPD…RRGDGDQAKP (88 aa)). The segment covering 145–156 (EESRRGDGDQAK) has biased composition (basic and acidic residues). C2H2-type zinc fingers lie at residues 158–180 (YKCG…TRIH), 186–208 (YRCE…IRTH), 214–238 (YKCR…SRCH), 244–266 (FKCN…IPKH), and 275–297 (HICN…LQKH). Position 395 is a phosphothreonine (threonine 395). 2 positions are modified to phosphoserine: serine 399 and serine 401. The disordered stretch occupies residues 417–475 (TPQHHLQQQQQQQQQQQAQQQQQAQHQPSPGPGNSAFTPLSATVAPPPHLQQHRGPPGS). A compositionally biased stretch (low complexity) spans 419-443 (QHHLQQQQQQQQQQQAQQQQQAQHQ). Serine 475 bears the Phosphoserine mark. Phosphotyrosine is present on residues tyrosine 479 and tyrosine 481.

The protein belongs to the krueppel C2H2-type zinc-finger protein family. Interacts with nab; which acts as a coactivator. Interacts with ap. Largely restricted to subsets of cells in the CNS throughout embryonic and first instar larval (L1) development. Expressed in a population of lateral interneurons, primarily projecting axons in the anterior and posterior commissures. Overlaps with ap within the thoracic ap cluster. By stage 17, it is restricted to 2 neurons within the ap-cluster, with one neuron typically continuing to display higher levels of expression. Selectively expressed at higher levels within the FMRFa Tv neurons. Expressed in all leucokinergic cells.

It localises to the nucleus. Its function is as follows. Transcription factor involved in neuronal fate specification. First required in embryonic CNS development to define the number of cells that express apterous (ap) in the ap thoracic cluster of interneurons. Later on, it plays a central role in the combinatorial code of transcription factors that specifies the fate of the Tv neuron in the ap cluster by participating in the transcription regulation of FMRFa in Tv cells. Also required for projection neuron dendritic targeting. The polypeptide is Zinc finger protein squeeze (sqz) (Drosophila melanogaster (Fruit fly)).